Reading from the N-terminus, the 160-residue chain is Transcription elongation factor GreA (160 aa).

Positions Leu43–Leu76 form a coiled coil.

Belongs to the GreA/GreB family.

Functionally, necessary for efficient RNA polymerase transcription elongation past template-encoded arresting sites. The arresting sites in DNA have the property of trapping a certain fraction of elongating RNA polymerases that pass through, resulting in locked ternary complexes. Cleavage of the nascent transcript by cleavage factors such as GreA or GreB allows the resumption of elongation from the new 3'terminus. GreA releases sequences of 2 to 3 nucleotides. The chain is Transcription elongation factor GreA from Chlorobium phaeobacteroides (strain BS1).